The primary structure comprises 262 residues: (5R,7aS)-5-hydroxy-7a-methyl-1-oxo-2,3,5,6,7,7a-hexahydro-1H-indene-carboxyl-CoA reductase (262 aa).

NAD(+) is bound by residues Asp50, Asp77, Val78, Asn104, Tyr170, Lys174, and Ala203. Residue Tyr170 is the Proton acceptor of the active site.

This sequence belongs to the short-chain dehydrogenases/reductases (SDR) family.

It catalyses the reaction (5R,7aS)-5-hydroxy-7a-methyl-1-oxo-2,3,5,6,7,7a-hexahydro-1H-indene-carboxyl-CoA + NAD(+) = (7aS)-7a-methyl-1,5-dioxo-2,3,5,6,7,7a-hexahydro-1H-indene-carboxyl-CoA + NADH + H(+). It participates in steroid metabolism; cholesterol degradation. With respect to regulation, requires the presence of IpdC. Its function is as follows. Involved in the final steps of cholesterol and steroid degradation. Probably catalyzes the oxidation of the 5-OH group of (5R,7aS)-5-hydroxy-7a-methyl-1-oxo-2,3,5,6,7,7a-hexahydro-1H-indene-carboxyl-CoA, leading to the formation of HIEC-CoA. This is (5R,7aS)-5-hydroxy-7a-methyl-1-oxo-2,3,5,6,7,7a-hexahydro-1H-indene-carboxyl-CoA reductase from Mycobacterium tuberculosis (strain ATCC 25618 / H37Rv).